The sequence spans 321 residues: Lipoyl synthase (321 aa).

[4Fe-4S] cluster contacts are provided by Cys68, Cys73, Cys79, Cys94, Cys98, Cys101, and Ser308. Residues 80–297 (FNHGTATFMI…KALADELGFT (218 aa)) form the Radical SAM core domain.

It belongs to the radical SAM superfamily. Lipoyl synthase family. [4Fe-4S] cluster serves as cofactor.

The protein resides in the cytoplasm. It catalyses the reaction [[Fe-S] cluster scaffold protein carrying a second [4Fe-4S](2+) cluster] + N(6)-octanoyl-L-lysyl-[protein] + 2 oxidized [2Fe-2S]-[ferredoxin] + 2 S-adenosyl-L-methionine + 4 H(+) = [[Fe-S] cluster scaffold protein] + N(6)-[(R)-dihydrolipoyl]-L-lysyl-[protein] + 4 Fe(3+) + 2 hydrogen sulfide + 2 5'-deoxyadenosine + 2 L-methionine + 2 reduced [2Fe-2S]-[ferredoxin]. The protein operates within protein modification; protein lipoylation via endogenous pathway; protein N(6)-(lipoyl)lysine from octanoyl-[acyl-carrier-protein]: step 2/2. Functionally, catalyzes the radical-mediated insertion of two sulfur atoms into the C-6 and C-8 positions of the octanoyl moiety bound to the lipoyl domains of lipoate-dependent enzymes, thereby converting the octanoylated domains into lipoylated derivatives. The polypeptide is Lipoyl synthase (Shewanella frigidimarina (strain NCIMB 400)).